The sequence spans 599 residues: Ecdysone oxidase (599 aa).

FAD contacts are provided by residues Asn-137–Val-140 and Trp-537–His-538. Catalysis depends on His-538, which acts as the Proton acceptor.

This sequence belongs to the GMC oxidoreductase family. The cofactor is FAD.

The catalysed reaction is ecdysone + O2 = 3-dehydroecdysone + H2O2. Its function is as follows. Involved in the inactivation of ecdysteroid molting hormones by converting ecdysteroids into 3-dehydroecdysteroids. The chain is Ecdysone oxidase from Spodoptera littoralis (Egyptian cotton leafworm).